Consider the following 569-residue polypeptide: MFFSKMLIPTLKEAPSDADIVSVKLMVRSGMIRKLASGFYELLPLGLKVLRKVENIIRQEMNSAGGQEVIFPLVFPKALWLETDRWNAYGKELFKLKDRKDAEFCLAPTAEEVVTDLIRKDIKSYKQLPVMLYQFGTKFRDEIRPRFGVMRSREFLMKDAYSFHADEADLEKYYKTMFDAYTNICIKCGFQFRAVEAASGVIGGSFSHEFMVLTDTGEEEMTWCSCGYGANSAKTECLKIEQSKEEPLPSEEIFTTDVCAIEDVAKLLNLSPKKFIKTMIYIADKKPVAVLVRGDYEINEIKLQTLLGADGMLLADEQTVISVTNAPIGFAGPAGLKNIKIIADLSVAELSNALTGANKKDYHLKNVNFKRDYNADIVADIRKVKRGDTCPRCKKEELKFSRGIEIGHTFKLGDKYSKSMNASYLDANGKEKFIIMGCYGIGVTRILAAIIEQSHDDDGIIWTNNIAPFEVVIVPLNYADEKTKETTEKIYKELSSKGLDVLIDDRDERAGIKFKDADLIGIPYRITISEKNLANGNVELKARRDGKDDAVRLFKPEGVVIELLKIFKK.

It belongs to the class-II aminoacyl-tRNA synthetase family. ProS type 1 subfamily. As to quaternary structure, homodimer.

The protein resides in the cytoplasm. It catalyses the reaction tRNA(Pro) + L-proline + ATP = L-prolyl-tRNA(Pro) + AMP + diphosphate. Its function is as follows. Catalyzes the attachment of proline to tRNA(Pro) in a two-step reaction: proline is first activated by ATP to form Pro-AMP and then transferred to the acceptor end of tRNA(Pro). As ProRS can inadvertently accommodate and process non-cognate amino acids such as alanine and cysteine, to avoid such errors it has two additional distinct editing activities against alanine. One activity is designated as 'pretransfer' editing and involves the tRNA(Pro)-independent hydrolysis of activated Ala-AMP. The other activity is designated 'posttransfer' editing and involves deacylation of mischarged Ala-tRNA(Pro). The misacylated Cys-tRNA(Pro) is not edited by ProRS. This chain is Proline--tRNA ligase, found in Endomicrobium trichonymphae.